A 518-amino-acid chain; its full sequence is Serine incorporator 4 (518 aa).

Helical transmembrane passes span 59 to 79, 122 to 142, 153 to 173, 184 to 204, 222 to 242, 259 to 279, 286 to 306, 338 to 357, 427 to 447, and 470 to 490; these read CSRLFYILLHVGASAICCLLL, VCAGTATFHLLQAVLLVHLHS, SFWLLKLLFLLGLCAIAFCIP, IGICGGFAFILLQLVLITAFA, FLAVLLATLGFYSMAGVGAVL, LLSLHLCFCGLISFLSIAPCI, SGLLQASVISCYIMYLTFSAL, ISLAMLSASIMYACVLFACN, AFHFVFFLASLYVMVTLTNWF, and VASCWACVLLYLGLLLAPLCW.

The protein belongs to the TDE1 family.

Its subcellular location is the membrane. Incorporates a polar amino acid serine into membranes and facilitates the synthesis of two serine-derived lipids, phosphatidylserine and sphingolipids. This Homo sapiens (Human) protein is Serine incorporator 4 (SERINC4).